Reading from the N-terminus, the 673-residue chain is UvrABC system protein B (673 aa).

In terms of domain architecture, Helicase ATP-binding spans 30–417 (NSILLGNKYQ…SSVVVDQIIR (388 aa)). Residue 43–50 (GVTGSGKT) coordinates ATP. Residues 96 to 119 (YYDYYQPESYVPSKDLFIEKEATI) carry the Beta-hairpin motif. In terms of domain architecture, Helicase C-terminal spans 434 to 600 (QMEDLYSEIQ…TIVKKIQNIL (167 aa)). In terms of domain architecture, UVR spans 627-662 (KKLIDKLKFDLEEAVNDERFEDAIVLRDKIKELSSK).

It belongs to the UvrB family. In terms of assembly, forms a heterotetramer with UvrA during the search for lesions. Interacts with UvrC in an incision complex.

The protein resides in the cytoplasm. In terms of biological role, the UvrABC repair system catalyzes the recognition and processing of DNA lesions. A damage recognition complex composed of 2 UvrA and 2 UvrB subunits scans DNA for abnormalities. Upon binding of the UvrA(2)B(2) complex to a putative damaged site, the DNA wraps around one UvrB monomer. DNA wrap is dependent on ATP binding by UvrB and probably causes local melting of the DNA helix, facilitating insertion of UvrB beta-hairpin between the DNA strands. Then UvrB probes one DNA strand for the presence of a lesion. If a lesion is found the UvrA subunits dissociate and the UvrB-DNA preincision complex is formed. This complex is subsequently bound by UvrC and the second UvrB is released. If no lesion is found, the DNA wraps around the other UvrB subunit that will check the other stand for damage. This is UvrABC system protein B from Borreliella burgdorferi (strain ATCC 35210 / DSM 4680 / CIP 102532 / B31) (Borrelia burgdorferi).